The following is a 116-amino-acid chain: Protein Rev (116 aa).

Phosphoserine; by host CK2 is present on residues Ser5 and Ser8. Residues 18–26 (LIKFLYQSN) form a homomultimerization region. The segment at 23-49 (YQSNPPPNPEGTRQARRNRRRRWRERQ) is disordered. Positions 34 to 50 (TRQARRNRRRRWRERQR) match the Nuclear localization signal and RNA-binding (RRE) motif. Basic residues predominate over residues 36 to 47 (QARRNRRRRWRE). Residues 73 to 84 (LQLPPLERLTLD) carry the Nuclear export signal and binding to XPO1 motif. Phosphoserine; by host occurs at positions 92 and 99. Residues 92–116 (SGTQGVGSPQILVESPTVLESGTKE) form a disordered region.

This sequence belongs to the HIV-1 REV protein family. In terms of assembly, homomultimer; when bound to the RRE. Multimeric assembly is essential for activity and may involve XPO1. Binds to human KPNB1, XPO1, TNPO1, RANBP5 and IPO7. Interacts with the viral Integrase. Interacts with human KHDRBS1. Interacts with human NAP1; this interaction decreases Rev multimerization and stimulates its activity. Interacts with human DEAD-box helicases DDX3 and DDX24; these interactions may serve for viral RNA export to the cytoplasm and packaging, respectively. Interacts with human PSIP1; this interaction may inhibit HIV-1 DNA integration by promoting dissociation of the Integrase-LEDGF/p75 complex. In terms of processing, asymmetrically arginine dimethylated at one site by host PRMT6. Methylation impairs the RNA-binding activity and export of viral RNA from the nucleus to the cytoplasm. Phosphorylated by protein kinase CK2. Presence of, and maybe binding to the N-terminus of the regulatory beta subunit of CK2 is necessary for CK2-mediated Rev's phosphorylation.

The protein localises to the host nucleus. It localises to the host nucleolus. The protein resides in the host cytoplasm. Functionally, escorts unspliced or incompletely spliced viral pre-mRNAs (late transcripts) out of the nucleus of infected cells. These pre-mRNAs carry a recognition sequence called Rev responsive element (RRE) located in the env gene, that is not present in fully spliced viral mRNAs (early transcripts). This function is essential since most viral proteins are translated from unspliced or partially spliced pre-mRNAs which cannot exit the nucleus by the pathway used by fully processed cellular mRNAs. Rev itself is translated from a fully spliced mRNA that readily exits the nucleus. Rev's nuclear localization signal (NLS) binds directly to KPNB1/Importin beta-1 without previous binding to KPNA1/Importin alpha-1. KPNB1 binds to the GDP bound form of RAN (Ran-GDP) and targets Rev to the nucleus. In the nucleus, the conversion from Ran-GDP to Ran-GTP dissociates Rev from KPNB1 and allows Rev's binding to the RRE in viral pre-mRNAs. Rev multimerization on the RRE via cooperative assembly exposes its nuclear export signal (NES) to the surface. Rev can then form a complex with XPO1/CRM1 and Ran-GTP, leading to nuclear export of the complex. Conversion from Ran-GTP to Ran-GDP mediates dissociation of the Rev/RRE/XPO1/RAN complex, so that Rev can return to the nucleus for a subsequent round of export. Beside KPNB1, also seems to interact with TNPO1/Transportin-1, RANBP5/IPO5 and IPO7/RANBP7 for nuclear import. The nucleoporin-like HRB/RIP is an essential cofactor that probably indirectly interacts with Rev to release HIV RNAs from the perinuclear region to the cytoplasm. The protein is Protein Rev of Human immunodeficiency virus type 1 group M subtype B (isolate BRU/LAI) (HIV-1).